The sequence spans 82 residues: RNA-binding protein KhpA (82 aa).

Residues 35-82 (STILELRVSQSDVGKIIGRRGRIARAIRTLLGACAAKTNRRVQLEILD) form the KH domain.

It belongs to the KhpA RNA-binding protein family. As to quaternary structure, forms a complex with KhpB.

It is found in the cytoplasm. A probable RNA chaperone. Forms a complex with KhpB which binds to cellular RNA and controls its expression. Plays a role in peptidoglycan (PG) homeostasis and cell length regulation. This chain is RNA-binding protein KhpA, found in Borreliella burgdorferi (strain ATCC 35210 / DSM 4680 / CIP 102532 / B31) (Borrelia burgdorferi).